A 367-amino-acid chain; its full sequence is TATA-box-binding protein-like (367 aa).

The segment at 1-26 (MKKQSKTHKVDYKYYNSGSKTSRNRN) is disordered. The segment covering 16–26 (NSGSKTSRNRN) has biased composition (polar residues).

The protein belongs to the TBP family.

In Acanthamoeba polyphaga (Amoeba), this protein is TATA-box-binding protein-like.